Here is a 365-residue protein sequence, read N- to C-terminus: MNKVRHFIDTQDLSKKEIFEIFRLMKMLKEARYCGAVPELLKNKTLAMIFEEPSTRTRVSFEAAMTLLGGHAQYLKPGELHLGVRESLYDTTKVLSHMCDGIMCRALKHETVLNLAKYADVPVLNGLTDYNHPTQAICDVFTMLEYMPATKNLEYEDIKFEDIKVVFIGDRTNVCSSTMHITTKLGMNFVHISPKRYQSPQEWVDIANENIKQANSGSVLVTDDLEQVKDADIVYTDLWWWVDQEDEAEERVKAFKPTYQVTPELMKKAGQQALFMHCLPASRNVEVYDEVIDSDQSIAFEQAENRLTAQMGLLVYYLYPQIDKSSNAVKDYYRGKVEAFMEHQDRSWKQRYTYNNDYAETKNKK.

Carbamoyl phosphate-binding positions include 54 to 58, Arg105, and His132; that span reads STRTR. A putrescine-binding site is contributed by 277-280; the sequence is HCLP.

This sequence belongs to the aspartate/ornithine carbamoyltransferase superfamily. PTCase family. As to quaternary structure, homotrimer.

It is found in the cytoplasm. It carries out the reaction carbamoyl phosphate + putrescine = N-carbamoylputrescine + phosphate + H(+). The protein operates within amine and polyamine biosynthesis; putrescine biosynthesis via agmatine pathway; putrescine from N-carbamoylputrescine (transferase route): step 1/1. Catalyzes the phosphorolysis of N-carbamoylputrescine to form carbamoyl phosphate and putrescine. Is involved in the degradation pathway of the polyamine agmatine. The chain is Putrescine carbamoyltransferase from Mycoplasma capricolum subsp. capricolum (strain California kid / ATCC 27343 / NCTC 10154).